The following is a 504-amino-acid chain: Arabinose import ATP-binding protein AraG (504 aa).

ABC transporter domains follow at residues L8–R243 and Y256–V499. Residue G40–S47 participates in ATP binding.

This sequence belongs to the ABC transporter superfamily. Arabinose importer (TC 3.A.1.2.2) family. The complex is composed of two ATP-binding proteins (AraG), two transmembrane proteins (AraH) and a solute-binding protein (AraF).

It localises to the cell inner membrane. It carries out the reaction L-arabinose(out) + ATP + H2O = L-arabinose(in) + ADP + phosphate + H(+). Its function is as follows. Part of the ABC transporter complex AraFGH involved in arabinose import. Responsible for energy coupling to the transport system. This is Arabinose import ATP-binding protein AraG from Escherichia coli (strain UTI89 / UPEC).